Reading from the N-terminus, the 150-residue chain is 16.9 kDa class I heat shock protein 1 (150 aa).

The interval 1 to 42 (MSLVRRSNVFDPFSLDLWDPFDSVFRSVVPATSDNDTAAFAN) is important for thermostability under elevated temperature. A sHSP domain is found at 36-150 (DTAAFANARI…PEVKAIEISG (115 aa)).

It belongs to the small heat shock protein (HSP20) family. In terms of assembly, forms oligomeric structures.

The protein resides in the cytoplasm. The chain is 16.9 kDa class I heat shock protein 1 (HSP16.9A) from Oryza sativa subsp. japonica (Rice).